Consider the following 579-residue polypeptide: Folliculin (579 aa).

A disordered region spans residues 32–52; that stretch reads GASCGDSIGQGEQAEDEEMGI. In terms of domain architecture, uDENN FLCN/SMCR8-type spans 86–242; the sequence is RSLAAGHPGY…RNGNAARSLT (157 aa). Positions 337-491 constitute a cDENN FLCN/SMCR8-type domain; it reads NMVQRRMGVF…ILNKIEAALS (155 aa). Positions 493–558 constitute a dDENN FLCN/SMCR8-type domain; that stretch reads ENLSMDVVDQ…LLKFWMTGLS (66 aa).

It belongs to the folliculin family. Component of the lysosomal folliculin complex (LFC).

It localises to the lysosome membrane. The protein resides in the cytoplasm. The protein localises to the cytosol. Its subcellular location is the cell projection. It is found in the cilium. It localises to the cytoskeleton. The protein resides in the microtubule organizing center. The protein localises to the centrosome. Its subcellular location is the spindle. It is found in the nucleus. Its activity is regulated as follows. GTPase-activating activity is inhibited in the folliculin complex (LFC), which stabilizes the GDP-bound state of RagA/RRAGA (or RagB/RRAGB), because Arg-164 is located far from the RagC/RRAGC or RagD/RRAGD nucleotide pocket. Disassembly of the LFC complex upon amino acid restimulation liberates the GTPase-activating activity. Multi-functional protein, involved in both the cellular response to amino acid availability and in the regulation of glycolysis. GTPase-activating protein that plays a key role in the cellular response to amino acid availability through regulation of the non-canonical mTORC1 signaling cascade controlling the MiT/TFE factors tfeb and tfe3. Activates mTORC1 by acting as a GTPase-activating protein: specifically stimulates GTP hydrolysis by RagC/RRAGC or RagD/RRAGD, promoting the conversion to the GDP-bound state of RagC/RRAGC or RagD/RRAGD, and thereby activating the kinase activity of mTORC1. The GTPase-activating activity is inhibited during starvation and activated in presence of nutrients. Acts as a key component for non-canonical mTORC1-dependent control of the MiT/TFE factors tfeb and tfe3, while it is not involved in mTORC1-dependent phosphorylation of canonical RPS6KB1/S6K1 and EIF4EBP1/4E-BP1. In low-amino acid conditions, the lysosomal folliculin complex (LFC) is formed on the membrane of lysosomes, which inhibits the GTPase-activating activity of flcn, inactivates mTORC1 and maximizes nuclear translocation of tfeb and tfe3. Upon amino acid restimulation, RagA/RRAGA (or RagB/RRAGB) nucleotide exchange promotes disassembly of the LFC complex and liberates the GTPase-activating activity of flcn, leading to activation of mTORC1 and subsequent cytoplasmic retention of tfeb and tfe3. Required for the exit of hematopoietic stem cell from pluripotency by promoting mTOR-dependent cytoplasmic retention of tfe3, thereby increasing Wnt signaling. Acts as an inhibitor of browning of adipose tissue by regulating mTOR-dependent cytoplasmic retention of tfe3. In response to flow stress, regulates STK11/LKB1 accumulation and mTORC1 activation through primary cilia. Required for starvation-induced perinuclear clustering of lysosomes by promoting association of rilp with its effector rab34. Involved in the control of embryonic stem cells differentiation; together with lamtor1 it is necessary to recruit and activate RagC/RRAGC and RagD/RRAGD at the lysosomes, and to induce exit of embryonic stem cells from pluripotency via non-canonical, mTOR-independent tfe3 inactivation. Regulates glycolysis by binding to lactate dehydrogenase ldha, acting as an uncompetitive inhibitor. This chain is Folliculin, found in Xenopus tropicalis (Western clawed frog).